The chain runs to 677 residues: Methionine--tRNA ligase (677 aa).

A 'HIGH' region motif is present at residues 15-25 (PYANGSIHLGH). Zn(2+) is bound by residues Cys-146, Cys-149, Cys-159, and Cys-162. The 'KMSKS' region motif lies at 333–337 (KMSKS). ATP is bound at residue Lys-336. The tRNA-binding domain occupies 575–677 (DFAKVDLRVA…AGAKPGHQVK (103 aa)).

This sequence belongs to the class-I aminoacyl-tRNA synthetase family. MetG type 1 subfamily. Homodimer. The cofactor is Zn(2+).

The protein resides in the cytoplasm. It catalyses the reaction tRNA(Met) + L-methionine + ATP = L-methionyl-tRNA(Met) + AMP + diphosphate. In terms of biological role, is required not only for elongation of protein synthesis but also for the initiation of all mRNA translation through initiator tRNA(fMet) aminoacylation. The polypeptide is Methionine--tRNA ligase (Escherichia coli O157:H7).